The primary structure comprises 434 residues: Serine hydroxymethyltransferase (434 aa).

(6S)-5,6,7,8-tetrahydrofolate contacts are provided by residues L133 and 137–139; that span reads GHL. An N6-(pyridoxal phosphate)lysine modification is found at K242.

It belongs to the SHMT family. In terms of assembly, homodimer. Pyridoxal 5'-phosphate serves as cofactor.

Its subcellular location is the cytoplasm. The enzyme catalyses (6R)-5,10-methylene-5,6,7,8-tetrahydrofolate + glycine + H2O = (6S)-5,6,7,8-tetrahydrofolate + L-serine. Its pathway is one-carbon metabolism; tetrahydrofolate interconversion. It functions in the pathway amino-acid biosynthesis; glycine biosynthesis; glycine from L-serine: step 1/1. Its function is as follows. Catalyzes the reversible interconversion of serine and glycine with tetrahydrofolate (THF) serving as the one-carbon carrier. This reaction serves as the major source of one-carbon groups required for the biosynthesis of purines, thymidylate, methionine, and other important biomolecules. Also exhibits THF-independent aldolase activity toward beta-hydroxyamino acids, producing glycine and aldehydes, via a retro-aldol mechanism. This Bradyrhizobium sp. (strain BTAi1 / ATCC BAA-1182) protein is Serine hydroxymethyltransferase.